A 384-amino-acid chain; its full sequence is Glucans biosynthesis protein C (384 aa).

10 helical membrane passes run 17–37 (AWLM…THSW), 54–74 (FIHA…SYML), 91–111 (VGIP…ILLQ), 140–160 (LWFL…FTWF), 173–193 (AISL…YAAI), 212–232 (FIVM…LAFI), 240–260 (FTTP…AYLL), 274–294 (TESV…FSLG), 311–331 (ASLF…AYIT), and 338–358 (LIGF…LYEI).

This sequence belongs to the acyltransferase 3 family. OpgC subfamily.

It localises to the cell membrane. It functions in the pathway glycan metabolism; osmoregulated periplasmic glucan (OPG) biosynthesis. Necessary for the succinyl substitution of periplasmic glucans. Could catalyze the transfer of succinyl residues from the cytoplasmic side of the membrane to the nascent glucan backbones on the periplasmic side of the membrane. In Salmonella typhi, this protein is Glucans biosynthesis protein C.